A 2109-amino-acid chain; its full sequence is Nonribosomal peptide synthetase sidE (2109 aa).

The interval 31 to 512 is adenylation 1; the sequence is LTPPSPPCLV…QNGKVDFRAI (482 aa). Residues 537 to 613 enclose the Carrier 1 domain; the sequence is AGLSETASKI…EIADTVQLDS (77 aa). S574 carries the O-(pantetheine 4'-phosphoryl)serine modification. Positions 646 to 908 are condensation 1; sequence DAYPVTALQE…LAVVPYAIAI (263 aa). The adenylation 2 stretch occupies residues 1058–1555; the sequence is RTLNGQFEAT…GKANRKQLKA (498 aa). One can recognise a Carrier 2 domain in the interval 1584 to 1660; the sequence is PLASETQKVL…AMADQLKGES (77 aa). S1621 carries the post-translational modification O-(pantetheine 4'-phosphoryl)serine. The tract at residues 1695 to 1968 is condensation 2; sequence YPCPPGQAEF…NFLPMRSKVD (274 aa).

This sequence belongs to the NRP synthetase family.

It functions in the pathway siderophore biosynthesis. Nonribosomal peptide synthetase; part of the siderophore biosynthetic pathway. Aspergillus fumigatus produces four types of siderophores, low-molecular-mass iron chelators, including excreted fusarinine C (FsC) and triacetylfusarinine C (TAFC) for iron uptake and intacellular ferricrocin (FC) for hyphal and hydroxyferricrocin (HFC) for conidial iron distribution and storage. TAFC consists of three N(2)-acetyl-N(5)-anhydromevalonyl-N(5)-hydroxyornithine residues cyclically linked by ester bonds; FC is a cyclic hexapeptide with the structure Gly-Ser-Gly-(N(5)-acetyl-N(5)-hydroxyornithine)x3. The biosynthesis of all four siderophores depends on the hydroxylation of ornithine, catalyzed by the monooxygenase sidA. Subsequently, the pathways for biosynthesis of extra- and intracellular siderophores split. For biosynthesis of extracellular siderophores, the transacylase sidF transfers anhydromevalonyl to N(5)-hydroxyornithine. The required anhydromevalonyl-CoA moiety is derived from mevalonate by CoA ligation and dehydration catalyzed by sidI and sidH respectively. The acetylation of N(5)-hydroxyornithine for FC biosynthesis involves the constitutively expressed sidL. FC is hydroxylated to HFC by an as yet uncharacterized enzyme during conidiation. Assembly of fusarinine C (FsC) and FC is catalyzed by two different nonribosomal peptide synthetases (NRPS), sidD and sidC respectively. Subsequently, sidG catalyzes N2-acetylation of FsC for forming TAFC. Both extra- and intracellular siderophores are crucial for growth during iron limitation and virulence. The protein is Nonribosomal peptide synthetase sidE of Aspergillus fumigatus (strain ATCC MYA-4609 / CBS 101355 / FGSC A1100 / Af293) (Neosartorya fumigata).